The primary structure comprises 205 residues: Holliday junction branch migration complex subunit RuvA (205 aa).

The segment at 1–64 (MIGKLTGLVD…EDAIRLFGFP (64 aa)) is domain I. The domain II stretch occupies residues 65-143 (SEVERDWFRL…ALGPVDSLTA (79 aa)). The segment at 144 to 153 (KLTIAEAEGT) is flexible linker. The domain III stretch occupies residues 153 to 205 (TAPVAAQDAITALVNLGYGRPQAAAAVATSLEALGETAPLADLIRRGLKELAR).

This sequence belongs to the RuvA family. In terms of assembly, homotetramer. Forms an RuvA(8)-RuvB(12)-Holliday junction (HJ) complex. HJ DNA is sandwiched between 2 RuvA tetramers; dsDNA enters through RuvA and exits via RuvB. An RuvB hexamer assembles on each DNA strand where it exits the tetramer. Each RuvB hexamer is contacted by two RuvA subunits (via domain III) on 2 adjacent RuvB subunits; this complex drives branch migration. In the full resolvosome a probable DNA-RuvA(4)-RuvB(12)-RuvC(2) complex forms which resolves the HJ.

The protein resides in the cytoplasm. The RuvA-RuvB-RuvC complex processes Holliday junction (HJ) DNA during genetic recombination and DNA repair, while the RuvA-RuvB complex plays an important role in the rescue of blocked DNA replication forks via replication fork reversal (RFR). RuvA specifically binds to HJ cruciform DNA, conferring on it an open structure. The RuvB hexamer acts as an ATP-dependent pump, pulling dsDNA into and through the RuvAB complex. HJ branch migration allows RuvC to scan DNA until it finds its consensus sequence, where it cleaves and resolves the cruciform DNA. This is Holliday junction branch migration complex subunit RuvA from Beijerinckia indica subsp. indica (strain ATCC 9039 / DSM 1715 / NCIMB 8712).